Here is a 134-residue protein sequence, read N- to C-terminus: U35-theraphotoxin-Cg1a (134 aa).

The first 18 residues, 1-18 (MLVTLLETFSVVFQVANG), serve as a signal peptide directing secretion. Residues 19–56 (DGNCVPRFQDDVEFCDNYILEAVTEASKMIAPRAREQK) constitute a propeptide that is removed on maturation.

Expressed by the venom gland.

It is found in the secreted. In terms of biological role, probable secreted venom toxin. In Chilobrachys guangxiensis (Chinese earth tiger tarantula), this protein is U35-theraphotoxin-Cg1a.